Reading from the N-terminus, the 440-residue chain is UDP-N-acetylmuramoylalanine--D-glutamate ligase (440 aa).

112–118 provides a ligand contact to ATP; sequence GSNGKST.

This sequence belongs to the MurCDEF family.

It localises to the cytoplasm. The enzyme catalyses UDP-N-acetyl-alpha-D-muramoyl-L-alanine + D-glutamate + ATP = UDP-N-acetyl-alpha-D-muramoyl-L-alanyl-D-glutamate + ADP + phosphate + H(+). It participates in cell wall biogenesis; peptidoglycan biosynthesis. Cell wall formation. Catalyzes the addition of glutamate to the nucleotide precursor UDP-N-acetylmuramoyl-L-alanine (UMA). The polypeptide is UDP-N-acetylmuramoylalanine--D-glutamate ligase (Blochmanniella pennsylvanica (strain BPEN)).